The following is a 756-amino-acid chain: Centromere protein I (756 aa).

A disordered region spans residues 1–60 (MSPQKRVKNVQAQNRTSQGSSSFQTTLSAWKVKQDPSNSKNISKHGQNNPVGDYEHADDQ). Composition is skewed to polar residues over residues 10–28 (VQAQ…TTLS) and 35–50 (DPSN…QNNP).

This sequence belongs to the CENP-I/CTF3 family. Component of the CENPA-CAD complex, composed of CENPI, CENPK, CENPL, CENPO, CENPP, CENPQ, CENPR and CENPS. The CENPA-CAD complex interacts with the CENPA-NAC complex, at least composed of CENPA, CENPC, CENPH, CENPM, CENPN, CENPT and CENPU. Interacts with SENP6. In terms of processing, sumoylated. Sumoylated form can be polyubiquitinated by RNF4, leading to its degradation. Desumoylation by SENP6 prevents its degradation.

It is found in the nucleus. It localises to the chromosome. The protein localises to the centromere. In terms of biological role, component of the CENPA-CAD (nucleosome distal) complex, a complex recruited to centromeres which is involved in assembly of kinetochore proteins, mitotic progression and chromosome segregation. May be involved in incorporation of newly synthesized CENPA into centromeres via its interaction with the CENPA-NAC complex. Required for the localization of CENPF, MAD1L1 and MAD2 (MAD2L1 or MAD2L2) to kinetochores. Involved in the response of gonadal tissues to follicle-stimulating hormone. The polypeptide is Centromere protein I (CENPI) (Homo sapiens (Human)).